The primary structure comprises 146 residues: Large ribosomal subunit protein uL11 (146 aa).

It belongs to the universal ribosomal protein uL11 family. Part of the ribosomal stalk of the 50S ribosomal subunit. Interacts with L10 and the large rRNA to form the base of the stalk. L10 forms an elongated spine to which L12 dimers bind in a sequential fashion forming a multimeric L10(L12)X complex. One or more lysine residues are methylated.

Functionally, forms part of the ribosomal stalk which helps the ribosome interact with GTP-bound translation factors. The chain is Large ribosomal subunit protein uL11 from Corynebacterium kroppenstedtii (strain DSM 44385 / JCM 11950 / CIP 105744 / CCUG 35717).